A 356-amino-acid chain; its full sequence is MGGAVSAGEDNDDLIDNLKEAQYIRTERVEQAFRAIDRGDYYLEGYRDNAYKDLAWKHGNIHLSAPCIYSEVMEALKLQPGLSFLNLGSGTGYLSTMVGLILGPFGINHGIELHSDVVEYAKEKLESFIKNSDSFDKFEFCEPAFVVGNCLQIASDSHQYDRIYCGAGVQKDHENYMKILLKVGGILVMPIEDQLTQIMRTGQNTWESKNILAVSFAPLVQPSKNDNGKPDSVGLPPCAVRNLQDLARIYIRRTLRNFINDEMQAKGIPQRAPPKRKRKRVKQRINTYVFVGNQLIPQPLDSEEDEKMEEDKEEEEKEPGEALKPEEPPQNLLREKIMKLPLPESLKAYLTYFREK.

Gly2 carries N-myristoyl glycine lipidation. The active site involves Ser64. AdoMet binding motif regions lie at residues 85–94 (LNLGSGTGYL), 160–164 (YDRIY), and 181–191 (LKVGGILVMPI). The interval 240–250 (VRNLQDLARIY) is BC-box. Positions 299–331 (PLDSEEDEKMEEDKEEEEKEPGEALKPEEPPQN) are disordered. Positions 301–318 (DSEEDEKMEEDKEEEEKE) are enriched in acidic residues. Residues 319–331 (PGEALKPEEPPQN) are compositionally biased toward basic and acidic residues. A CUL-box region spans residues 340-343 (LPLP).

It belongs to the methyltransferase superfamily. L-isoaspartyl/D-aspartyl protein methyltransferase family. As to quaternary structure, component of the probable ECS(PCMTD1) E3 ubiquitin-protein ligase complex, at least composed of CUL5, ELOB, ELOC, RBX2 and PCMTD1. Interacts (via the BC-box) with ELOB and ELOC; the interaction is direct and stabilizes PCMTD1.

It localises to the cytoplasm. The protein localises to the membrane. Its function is as follows. Substrate recognition component of an ECS (Elongin BC-CUL5-SOCS-box protein) E3 ubiquitin ligase complex which mediates the ubiquitination and subsequent proteasomal degradation of target proteins. Specifically binds to the methyltransferase cofactor S-adenosylmethionine (AdoMet) via the N-terminal AdoMet binding motif, but does not display methyltransferase activity. May provide an alternate maintenance pathway for modified proteins by acting as a damage-specific E3 ubiquitin ligase adaptor protein. In Bos taurus (Bovine), this protein is Protein-L-isoaspartate O-methyltransferase domain-containing protein 1 (PCMTD1).